The following is a 141-amino-acid chain: Large ribosomal subunit protein uL11 (141 aa).

This sequence belongs to the universal ribosomal protein uL11 family. As to quaternary structure, part of the ribosomal stalk of the 50S ribosomal subunit. Interacts with L10 and the large rRNA to form the base of the stalk. L10 forms an elongated spine to which L12 dimers bind in a sequential fashion forming a multimeric L10(L12)X complex. Post-translationally, one or more lysine residues are methylated.

Its function is as follows. Forms part of the ribosomal stalk which helps the ribosome interact with GTP-bound translation factors. The sequence is that of Large ribosomal subunit protein uL11 from Chloroflexus aurantiacus (strain ATCC 29366 / DSM 635 / J-10-fl).